The chain runs to 214 residues: Octanoyltransferase (214 aa).

The BPL/LPL catalytic domain occupies 35–211 (KSNIDFIWLG…IIQEEFYFNF (177 aa)). Residues 75-82 (RGGEVTCH), 142-144 (SIG), and 155-157 (GFS) contribute to the substrate site. Cys173 serves as the catalytic Acyl-thioester intermediate.

The protein belongs to the LipB family.

The protein localises to the cytoplasm. The enzyme catalyses octanoyl-[ACP] + L-lysyl-[protein] = N(6)-octanoyl-L-lysyl-[protein] + holo-[ACP] + H(+). Its pathway is protein modification; protein lipoylation via endogenous pathway; protein N(6)-(lipoyl)lysine from octanoyl-[acyl-carrier-protein]: step 1/2. Functionally, catalyzes the transfer of endogenously produced octanoic acid from octanoyl-acyl-carrier-protein onto the lipoyl domains of lipoate-dependent enzymes. Lipoyl-ACP can also act as a substrate although octanoyl-ACP is likely to be the physiological substrate. The polypeptide is Octanoyltransferase (Prochlorococcus marinus (strain MIT 9515)).